Reading from the N-terminus, the 965-residue chain is Probable serine/threonine-protein kinase DDB_G0291516 (965 aa).

Positions 114–170 are disordered; that stretch reads KDSQKELLPSPQQLTPPTSLPSLPLLPLPQAPEQNEEQQLTQPPSPPSIPPPPPQKK. 2 stretches are compositionally biased toward low complexity: residues 119–136 and 144–155; these read ELLPSPQQLTPPTSLPSL and APEQNEEQQLTQ. A compositionally biased stretch (pro residues) spans 156 to 168; the sequence is PPSPPSIPPPPPQ. 2 ANK repeats span residues 271–301 and 310–339; these read KGETPLHSLIINNSESCLKKLVIAKINHMGI and LNKNLLAHAIEKGDIDVIRLVLIGGCPLKM. The 281-residue stretch at 459 to 739 folds into the Protein kinase domain; sequence IDFHTQIGSA…NVKAIKKEFL (281 aa). ATP contacts are provided by residues 465–473 and Lys486; that span reads IGSAGNASV. Catalysis depends on Asp587, which acts as the Proton acceptor. The chain crosses the membrane as a helical span at residues 653–673; it reads IYSLGIILWELVCVAMTGTYI. Asn760, Asn765, Asn905, Asn909, Asn910, Asn914, Asn934, and Asn938 each carry an N-linked (GlcNAc...) asparagine glycan. Residues 881 to 940 are compositionally biased toward low complexity; the sequence is NINKNKNNNNNNNNNNNNNNNINNNNTFNNSTNNNSNDNINIPYDFNNNNNNNNNSCNNS. The interval 881 to 942 is disordered; that stretch reads NINKNKNNNN…NNNSCNNSKK (62 aa).

This sequence belongs to the protein kinase superfamily. Ser/Thr protein kinase family.

It localises to the membrane. The catalysed reaction is L-seryl-[protein] + ATP = O-phospho-L-seryl-[protein] + ADP + H(+). The enzyme catalyses L-threonyl-[protein] + ATP = O-phospho-L-threonyl-[protein] + ADP + H(+). The sequence is that of Probable serine/threonine-protein kinase DDB_G0291516 from Dictyostelium discoideum (Social amoeba).